Consider the following 182-residue polypeptide: UPF0301 protein NMB1336 (182 aa).

This sequence belongs to the UPF0301 (AlgH) family.

The polypeptide is UPF0301 protein NMB1336 (Neisseria meningitidis serogroup B (strain ATCC BAA-335 / MC58)).